The chain runs to 156 residues: Ribosomal RNA large subunit methyltransferase H (156 aa).

Residues L72, G104, and 123–128 (LGKMVW) each bind S-adenosyl-L-methionine.

The protein belongs to the RNA methyltransferase RlmH family. As to quaternary structure, homodimer.

It localises to the cytoplasm. It catalyses the reaction pseudouridine(1915) in 23S rRNA + S-adenosyl-L-methionine = N(3)-methylpseudouridine(1915) in 23S rRNA + S-adenosyl-L-homocysteine + H(+). Its function is as follows. Specifically methylates the pseudouridine at position 1915 (m3Psi1915) in 23S rRNA. The protein is Ribosomal RNA large subunit methyltransferase H of Roseobacter denitrificans (strain ATCC 33942 / OCh 114) (Erythrobacter sp. (strain OCh 114)).